A 267-amino-acid polypeptide reads, in one-letter code: Phosphate import ATP-binding protein PstB 2 (267 aa).

The region spanning 21-262 (LSTKDLHVYY…AKLQSTSDYV (242 aa)) is the ABC transporter domain. ATP is bound at residue 53–60 (GPSGCGKS).

The protein belongs to the ABC transporter superfamily. Phosphate importer (TC 3.A.1.7) family. In terms of assembly, the complex is composed of two ATP-binding proteins (PstB), two transmembrane proteins (PstC and PstA) and a solute-binding protein (PstS).

The protein localises to the cell membrane. The enzyme catalyses phosphate(out) + ATP + H2O = ADP + 2 phosphate(in) + H(+). Its function is as follows. Part of the ABC transporter complex PstSACB involved in phosphate import. Responsible for energy coupling to the transport system. The protein is Phosphate import ATP-binding protein PstB 2 of Streptococcus mutans serotype c (strain ATCC 700610 / UA159).